We begin with the raw amino-acid sequence, 154 residues long: Transcriptional repressor NrdR (154 aa).

The segment at 3 to 34 is a zinc-finger region; the sequence is CPFCRHPDSRVVDSRETDEGQAIRRRRSCPEC. Residues 46-136 form the ATP-cone domain; sequence LAVVKRSGVT…VYRSFESAAD (91 aa).

It belongs to the NrdR family. Zn(2+) is required as a cofactor.

Negatively regulates transcription of bacterial ribonucleotide reductase nrd genes and operons by binding to NrdR-boxes. This is Transcriptional repressor NrdR from Mycobacterium sp. (strain JLS).